Reading from the N-terminus, the 246-residue chain is 3-deoxy-manno-octulosonate cytidylyltransferase (246 aa).

The protein belongs to the KdsB family.

The protein resides in the cytoplasm. The catalysed reaction is 3-deoxy-alpha-D-manno-oct-2-ulosonate + CTP = CMP-3-deoxy-beta-D-manno-octulosonate + diphosphate. It participates in nucleotide-sugar biosynthesis; CMP-3-deoxy-D-manno-octulosonate biosynthesis; CMP-3-deoxy-D-manno-octulosonate from 3-deoxy-D-manno-octulosonate and CTP: step 1/1. Its pathway is bacterial outer membrane biogenesis; lipopolysaccharide biosynthesis. Activates KDO (a required 8-carbon sugar) for incorporation into bacterial lipopolysaccharide in Gram-negative bacteria. The polypeptide is 3-deoxy-manno-octulosonate cytidylyltransferase (Myxococcus xanthus (strain DK1622)).